The chain runs to 799 residues: E3 UFM1-protein ligase 1 homolog (799 aa).

Residues Thr429 to Asp483 are disordered. Residues Lys458–Lys468 are compositionally biased toward basic residues. Low complexity predominate over residues Gln469–Ile478.

This sequence belongs to the UFL1 family.

Its function is as follows. E3 UFM1-protein ligase that mediates ufmylation of target proteins. This is E3 UFM1-protein ligase 1 homolog from Dictyostelium discoideum (Social amoeba).